Reading from the N-terminus, the 345-residue chain is Glycerol-3-phosphate dehydrogenase [NAD(P)+] (345 aa).

The NADPH site is built by S11, W12, H32, R33, and K106. Positions 106, 137, and 139 each coordinate sn-glycerol 3-phosphate. A141 provides a ligand contact to NADPH. Sn-glycerol 3-phosphate is bound by residues K192, D245, S255, R256, and N257. K192 (proton acceptor) is an active-site residue. NADPH is bound at residue R256. The NADPH site is built by V280 and E282.

It belongs to the NAD-dependent glycerol-3-phosphate dehydrogenase family.

Its subcellular location is the cytoplasm. The catalysed reaction is sn-glycerol 3-phosphate + NAD(+) = dihydroxyacetone phosphate + NADH + H(+). It catalyses the reaction sn-glycerol 3-phosphate + NADP(+) = dihydroxyacetone phosphate + NADPH + H(+). It functions in the pathway membrane lipid metabolism; glycerophospholipid metabolism. In terms of biological role, catalyzes the reduction of the glycolytic intermediate dihydroxyacetone phosphate (DHAP) to sn-glycerol 3-phosphate (G3P), the key precursor for phospholipid synthesis. The protein is Glycerol-3-phosphate dehydrogenase [NAD(P)+] of Bacillus pumilus (strain SAFR-032).